A 399-amino-acid chain; its full sequence is Exodeoxyribonuclease 7 large subunit (399 aa).

This sequence belongs to the XseA family. As to quaternary structure, heterooligomer composed of large and small subunits.

The protein localises to the cytoplasm. It carries out the reaction Exonucleolytic cleavage in either 5'- to 3'- or 3'- to 5'-direction to yield nucleoside 5'-phosphates.. Its function is as follows. Bidirectionally degrades single-stranded DNA into large acid-insoluble oligonucleotides, which are then degraded further into small acid-soluble oligonucleotides. In Clostridium beijerinckii (strain ATCC 51743 / NCIMB 8052) (Clostridium acetobutylicum), this protein is Exodeoxyribonuclease 7 large subunit.